A 117-amino-acid polypeptide reads, in one-letter code: Heat shock 70 kDa protein 1-like (117 aa).

Residues E72 to K75 and G84 to R87 contribute to the ATP site.

It belongs to the heat shock protein 70 family. As to quaternary structure, interacts with PRKN. As to expression, detected at higher levels in caput epididymal spermatazoa than in cauda epididymal spermatazoa (at protein level).

In terms of biological role, molecular chaperone implicated in a wide variety of cellular processes, including protection of the proteome from stress, folding and transport of newly synthesized polypeptides, activation of proteolysis of misfolded proteins and the formation and dissociation of protein complexes. Plays a pivotal role in the protein quality control system, ensuring the correct folding of proteins, the re-folding of misfolded proteins and controlling the targeting of proteins for subsequent degradation. This is achieved through cycles of ATP binding, ATP hydrolysis and ADP release, mediated by co-chaperones. The affinity for polypeptides is regulated by its nucleotide bound state. In the ATP-bound form, it has a low affinity for substrate proteins. However, upon hydrolysis of the ATP to ADP, it undergoes a conformational change that increases its affinity for substrate proteins. It goes through repeated cycles of ATP hydrolysis and nucleotide exchange, which permits cycles of substrate binding and release. Positive regulator of PRKN translocation to damaged mitochondria. This chain is Heat shock 70 kDa protein 1-like, found in Mesocricetus auratus (Golden hamster).